Consider the following 701-residue polypeptide: Arachidonate 12-lipoxygenase, 12R-type (701 aa).

In terms of domain architecture, PLAT spans 2-119; sequence ATYKVKVATG…TLALREATGK (118 aa). The Lipoxygenase domain occupies 120–701; sequence ITADDTLPIL…PVLIENSISI (582 aa). Fe cation is bound by residues His-398, His-403, His-578, Asn-582, and Ile-701.

This sequence belongs to the lipoxygenase family. Requires Fe cation as cofactor. Expressed in skin epidermis and other stratified epithelia including tongue and forestomach. Low levels of expression are found in trachea, brain and lung. Not expressed in intestine, liver, kidney, adipose tissue, muscle or hematopoietic cells.

It localises to the cytoplasm. The protein resides in the perinuclear region. The enzyme catalyses 1-O-methyl-(5Z,8Z,11Z,14Z)-eicosatetraenoate + O2 = 1-O-methyl (5Z,8Z,10E,12R,14Z)-hydroperoxyiecosatetraenoate. The catalysed reaction is 1-O-methyl-(5Z,8Z,11Z,14Z)-eicosatetraenoate + O2 = 1-O-methyl-8-hydroperoxy-(5Z,9E,11Z,14Z)-eicosatetraenoate. It catalyses the reaction (5Z,8Z,11Z,14Z)-eicosatetraenoate + O2 = (12R)-hydroperoxy-(5Z,8Z,10E,14Z)-eicosatetraenoate. It carries out the reaction N-[omega-(9Z,12Z)-octadecadienoyloxy]acyl-beta-D-glucosyl-(1&lt;-&gt;1)-octadecasphing-4E-enine + O2 = N-[omega-(9R)-hydroperoxy-(10E,12Z)-octadecadienoyloxy]acyl-beta-D-glucosyl-(1&lt;-&gt;1)-octadecasphing-4E-enine. The enzyme catalyses a N-[omega-(9Z,12Z)-octadecadienoyloxy]-acylsphin-4E-enine + O2 = a N-[omega-(9R)-hydroperoxy-(10E,12Z)-octadecadienoyloxy]-acylsphin-4E-enine. The catalysed reaction is (6Z,9Z,12Z)-octadecatrienoate + O2 = 10-hydroperoxy-(6Z,8E,12Z)-octadecatrienoate. It catalyses the reaction (4Z,7Z,10Z,13Z,16Z,19Z)-docosahexaenoate + O2 = 14-hydroperoxy-(4Z,7Z,10Z,12E,16Z,19Z)-docosahexaenoate. It carries out the reaction (8Z,11Z,14Z)-eicosatrienoate + O2 = (8Z,10E,14Z)-12-hydroperoxyeicosatrienoate. The enzyme catalyses (5Z,8Z,11Z,14Z,17Z)-eicosapentaenoate + O2 = (5Z,7Z,8Z,10E,14Z,17Z)-12-hydroperoxyeicosapentaenoate. The catalysed reaction is (6Z,9Z,12Z)-octadecatrienoate + O2 = 10R-hydroperoxy-(6Z,8E,12Z)-octadecatrienoate. It catalyses the reaction 1-O-methyl-(5Z,8Z,11Z,14Z)-eicosatetraenoate + O2 = 1-O-methyl-(8R)-hydroperoxy-(5Z,9E,11Z,14Z)-eicosatrienoate. It carries out the reaction 1-O-methyl-(9Z,12Z)-octadecadienoate + O2 = 1-O-methyl-(9R)-hydroperoxy-(10E,12Z)-octadecadienoate. The enzyme catalyses 1-O-methyl-20-hydroxy-(5Z,8Z,11Z,14Z)-eicosatetraenoate + O2 = 1-O-methyl-8-hydroperoxy-20-hydroxy-(5Z,9E,11Z,14Z)-eicosatetraenoate. The catalysed reaction is 1-O-methyl-20-hydroxy-(5Z,8Z,11Z,14Z)-eicosatetraenoate + O2 = 1-O-methyl-12-hydroperoxy-20-hydroxy-(5Z,8Z,10E,14Z)-eicosatetraenoate. It catalyses the reaction 1-O-methyl-20-hydroxy-(5Z,8Z,11Z,14Z)-eicosatetraenoate + O2 = 1-O-methyl-9-hydroperoxy-20-hydroxy-(5Z,7E,11Z,14Z)-eicosatetraenoate. It carries out the reaction 1-O-methyl-(9Z,12Z)-octadecadienoate + O2 = 1-O-methyl-(13S)-hydroperoxy-(9Z,11E)-octadecadienoate. The protein operates within lipid metabolism; hydroperoxy eicosatetraenoic acid biosynthesis. It functions in the pathway lipid metabolism; sphingolipid metabolism. Increased by calcium. Functionally, catalyzes the regio and stereo-specific incorporation of a single molecule of dioxygen into free and esterified polyunsaturated fatty acids generating lipid hydroperoxides that can be further reduced to the corresponding hydroxy species. Does not convert arachidonic acid to (12R)-hydroperoxyeicosatetraenoic acid/(12R)-HPETE. In the skin, acts upstream of ALOXE3 on the lineolate moiety of esterified omega-hydroxyacyl-sphingosine (EOS) ceramides to produce an epoxy-ketone derivative, a crucial step in the conjugation of omega-hydroxyceramide to membrane proteins. Therefore plays a crucial role in the synthesis of corneocytes lipid envelope and the establishment of the skin barrier to water loss. May also play a role in the regulation of the expression of airway mucins. The chain is Arachidonate 12-lipoxygenase, 12R-type from Mus musculus (Mouse).